Here is a 1307-residue protein sequence, read N- to C-terminus: Cyclic nucleotide-gated channel beta-1 (1307 aa).

Disordered regions lie at residues 1-101 (MLGW…AQVA), 126-178 (QPVY…TEPS), 193-262 (LPQP…PGDP), 320-458 (DSCW…LDSC), 470-625 (LERA…SQNS), and 648-681 (EKLIDPDVTSDEESPKPSPAKKAPDSAPAQKPAE). Residues 1–720 (MLGWVQRVLP…SIDPLTNLMY (720 aa)) lie on the Cytoplasmic side of the membrane. The span at 43-59 (VQPEPEPEPEPAPEEAA) shows a compositional bias: acidic residues. Positions 165-174 (GSDKTSKTQD) are enriched in basic and acidic residues. The span at 361–386 (QEEEEEEKEEKEEKEEEEEKEEEEKR) shows a compositional bias: acidic residues. Residues 387–406 (EEEKKKEKEEEKKEKEKEEK) show a composition bias toward basic and acidic residues. Composition is skewed to acidic residues over residues 407-451 (EEKE…EEEP) and 483-518 (LPEEEEEKEEEKKEEEEEKEEEEEKEEEEEKEEEGE). The span at 550 to 560 (TIPPPERPPVS) shows a compositional bias: pro residues. The segment at 621-631 (ASQNSAIINDR) is calmodulin-binding CaM1. The helical transmembrane segment at 721–742 (ILWLFFVVLAWNWNCWLIPVRW) threads the bilayer. The Extracellular segment spans residues 743–751 (AFPYQRADN). A helical transmembrane segment spans residues 752-773 (IHLWLLMDYLCDFIYLLDITVF). At 774–788 (QMRLQFVKGGDIITD) the chain is on the cytoplasmic side. The chain crosses the membrane as a helical span at residues 789–808 (KKEMRNNYLKSQRFKMDLLC). Topologically, residues 809–824 (LLPLDFLYLKLGVNPL) are extracellular. A helical membrane pass occupies residues 825–837 (LRLPRCLKYMAFF). At 838 to 849 (EFNNRLEAILSK) the chain is on the cytoplasmic side. The helical transmembrane segment at 850 to 872 (AYVYRVIRTTAYLLYSLHLNSCL) threads the bilayer. Positions 850-949 (AYVYRVIRTT…IGQMRDVVGA (100 aa)) are ion conduction pathway. Over 873–895 (YYWASAFQGIGSTHWVYDGVGNS) the chain is Extracellular. Helical transmembrane passes span 896–922 (YIRCYYWAVKTLITIGGLPDPQTLFEI) and 923–948 (VFQLLNYFTGVFAFSVMIGQMRDVVG). Residues 949-1307 (AATAGQTYYR…MLEEKKEEVE (359 aa)) are Cytoplasmic-facing. Residues 952-1028 (AGQTYYRSCM…NIVSKVALFQ (77 aa)) are C-linker. A cNMP-binding domain region spans residues 1026–1130 (LFQGCDRQMI…LDKKDLNEIL (105 aa)). The cyclic nucleotide-binding domain stretch occupies residues 1032–1148 (RQMIFDMLKR…LLRKKARRML (117 aa)). 3',5'-cyclic GMP is bound by residues Gly1093, Glu1094, Ser1096, Arg1106, and Thr1107. Arg1106 is a binding site for 3',5'-cyclic AMP. Residues 1212–1218 (QQQLLEQ) are calmodulin-binding CaM2. A compositionally biased stretch (low complexity) spans 1214–1238 (QLLEQAKSSQEAGGEEGSGATDQPA). The interval 1214 to 1307 (QLLEQAKSSQ…MLEEKKEEVE (94 aa)) is disordered. Pro residues predominate over residues 1250 to 1261 (EPPAPSSPPPAS).

It belongs to the cyclic nucleotide-gated cation channel (TC 1.A.1.5) family. CNGB1 subfamily. The rod cyclic nucleotide-gated channel is a heterotetramer composed of CNGA1 and CNGB1 subunits with 3:1 stoichiometry. CNGA1:CNGB1 channel binds Ca(2+)-bound CALM1 via CaM1 and CaM2 regions of the CNGB1 subunit; this interaction modulates the affinity of the channel for cNMPs in response to intracellular Ca(2+) levels. In terms of assembly, the olfactory cyclic nucleotide-gated channel is a heterotetramer composed of CNGA2, CNGA4 and CNGB1b subunits with 2:1:1 stoichiometry. Expressed in olfactory sensory cilia (at protein level).

It is found in the cell projection. It localises to the cilium membrane. It catalyses the reaction Ca(2+)(in) = Ca(2+)(out). It carries out the reaction Na(+)(in) = Na(+)(out). The catalysed reaction is K(+)(in) = K(+)(out). The enzyme catalyses NH4(+)(in) = NH4(+)(out). It catalyses the reaction Rb(+)(in) = Rb(+)(out). It carries out the reaction Li(+)(in) = Li(+)(out). The catalysed reaction is Cs(+)(in) = Cs(+)(out). Functionally, pore-forming subunit of the rod cyclic nucleotide-gated channel. Mediates rod photoresponses at dim light converting transient changes in intracellular cGMP levels into electrical signals. In the dark, cGMP levels are high and keep the channel open enabling a steady inward current carried by Na(+) and Ca(2+) ions that leads to membrane depolarization and neurotransmitter release from synaptic terminals. Upon photon absorption cGMP levels decline leading to channel closure and membrane hyperpolarization that ultimately slows neurotransmitter release and signals the presence of light, the end point of the phototransduction cascade. Conducts cGMP- and cAMP-gated ion currents, with permeability for monovalent and divalent cations. The selectivity for Ca(2+) over Na(+) increases with cGMP concentrations, whereas the selectivity among monovalent ions is independent of the cGMP levels. Pore-forming subunit of the olfactory cyclic nucleotide-gated channel. Operates in the cilia of olfactory sensory neurons where chemical stimulation of the odorant is converted to an electrical signal. Mediates odorant-induced cAMP-dependent Ca(2+) influx triggering neuron depolarization. The rise of intracellular Ca(2+) levels potentiates the olfactory response by activating Ca(2+)-dependent Cl(-) channels, but it also serves as a negative feedback signal to desensitize the channel for rapid adaptation to odorants. The chain is Cyclic nucleotide-gated channel beta-1 from Rattus norvegicus (Rat).